We begin with the raw amino-acid sequence, 410 residues long: Argininosuccinate synthase (410 aa).

ATP is bound at residue 10–18 (AYSGGLDTS). Residues tyrosine 88 and serine 93 each contribute to the L-citrulline site. Glycine 118 contacts ATP. The L-aspartate site is built by threonine 120, asparagine 124, and aspartate 125. Asparagine 124 is an L-citrulline binding site. L-citrulline is bound by residues arginine 128, serine 177, serine 186, glutamate 262, and tyrosine 274.

It belongs to the argininosuccinate synthase family. Type 1 subfamily. As to quaternary structure, homotetramer.

It is found in the cytoplasm. The enzyme catalyses L-citrulline + L-aspartate + ATP = 2-(N(omega)-L-arginino)succinate + AMP + diphosphate + H(+). The protein operates within amino-acid biosynthesis; L-arginine biosynthesis; L-arginine from L-ornithine and carbamoyl phosphate: step 2/3. This Thermoanaerobacter sp. (strain X514) protein is Argininosuccinate synthase.